The chain runs to 127 residues: Large ribosomal subunit protein bL17 (127 aa).

This sequence belongs to the bacterial ribosomal protein bL17 family. As to quaternary structure, part of the 50S ribosomal subunit. Contacts protein L32.

This chain is Large ribosomal subunit protein bL17, found in Actinobacillus pleuropneumoniae serotype 7 (strain AP76).